The primary structure comprises 132 residues: Agouti-signaling protein (132 aa).

The first 22 residues, methionine 1–serine 22, serve as a signal peptide directing secretion. Residue asparagine 39 is glycosylated (N-linked (GlcNAc...) asparagine). The interval isoleucine 62 to proline 88 is disordered. Residues serine 63–methionine 79 are compositionally biased toward basic and acidic residues. Disulfide bonds link cysteine 93–cysteine 108, cysteine 100–cysteine 114, cysteine 107–cysteine 125, cysteine 111–cysteine 132, and cysteine 116–cysteine 123. In terms of domain architecture, Agouti spans cysteine 93–cysteine 132.

It is found in the secreted. Its function is as follows. Involved in the regulation of melanogenesis. The binding of ASP to MC1R precludes alpha-MSH initiated signaling and thus blocks production of cAMP, leading to a down-regulation of eumelanogenesis (brown/black pigment) and thus increasing synthesis of pheomelanin (yellow/red pigment). The protein is Agouti-signaling protein (ASIP) of Macaca radiata (Bonnet macaque).